The primary structure comprises 239 residues: Biosynthetic peptidoglycan transglycosylase (239 aa).

Residues 29 to 49 (GMFGLGALMLVWIVAYAVVPV) form a helical membrane-spanning segment.

Belongs to the glycosyltransferase 51 family.

It is found in the cell inner membrane. The enzyme catalyses [GlcNAc-(1-&gt;4)-Mur2Ac(oyl-L-Ala-gamma-D-Glu-L-Lys-D-Ala-D-Ala)](n)-di-trans,octa-cis-undecaprenyl diphosphate + beta-D-GlcNAc-(1-&gt;4)-Mur2Ac(oyl-L-Ala-gamma-D-Glu-L-Lys-D-Ala-D-Ala)-di-trans,octa-cis-undecaprenyl diphosphate = [GlcNAc-(1-&gt;4)-Mur2Ac(oyl-L-Ala-gamma-D-Glu-L-Lys-D-Ala-D-Ala)](n+1)-di-trans,octa-cis-undecaprenyl diphosphate + di-trans,octa-cis-undecaprenyl diphosphate + H(+). Its pathway is cell wall biogenesis; peptidoglycan biosynthesis. Its function is as follows. Peptidoglycan polymerase that catalyzes glycan chain elongation from lipid-linked precursors. This Jannaschia sp. (strain CCS1) protein is Biosynthetic peptidoglycan transglycosylase.